Here is a 272-residue protein sequence, read N- to C-terminus: Endoplasmic reticulum resident protein 27 (272 aa).

Residues 1-25 (MEAMPSRCLFLLFLSTCKLSPEVVA) form the signal peptide. The Thioredoxin domain occupies 38 to 151 (EPMRLTDVQA…LVTEYNAITA (114 aa)). N99 carries N-linked (GlcNAc...) asparagine glycosylation. Residues 229–232 (DKWD) form a PDIA3-binding site region. The Prevents secretion from ER signature appears at 269–272 (KVEL).

The protein belongs to the protein disulfide isomerase family. As to quaternary structure, interacts with PDIA3.

It is found in the endoplasmic reticulum lumen. Specifically binds unfolded proteins and may recruit protein disulfide isomerase PDIA3 to unfolded substrates. Binds protein substrates via a hydrophobic pocket in the C-terminal domain. May play a role in the unfolded stress response. This chain is Endoplasmic reticulum resident protein 27 (ERP27), found in Bos taurus (Bovine).